A 346-amino-acid polypeptide reads, in one-letter code: Thiamine-phosphate synthase (346 aa).

The interval Met-1 to Glu-125 is unknown. The interval Ile-126–Lys-346 is thiamine-phosphate synthase. 4-amino-2-methyl-5-(diphosphooxymethyl)pyrimidine-binding positions include Gln-177–Lys-181 and Asn-209. 2 residues coordinate Mg(2+): Asp-210 and Asp-229. Position 248 (Ser-248) interacts with 4-amino-2-methyl-5-(diphosphooxymethyl)pyrimidine. 2-[(2R,5Z)-2-carboxy-4-methylthiazol-5(2H)-ylidene]ethyl phosphate is bound at residue Thr-274–Ser-276. Residue Lys-277 coordinates 4-amino-2-methyl-5-(diphosphooxymethyl)pyrimidine. Gly-304 contacts 2-[(2R,5Z)-2-carboxy-4-methylthiazol-5(2H)-ylidene]ethyl phosphate.

It belongs to the thiamine-phosphate synthase family. Mg(2+) serves as cofactor.

The enzyme catalyses 2-[(2R,5Z)-2-carboxy-4-methylthiazol-5(2H)-ylidene]ethyl phosphate + 4-amino-2-methyl-5-(diphosphooxymethyl)pyrimidine + 2 H(+) = thiamine phosphate + CO2 + diphosphate. It catalyses the reaction 2-(2-carboxy-4-methylthiazol-5-yl)ethyl phosphate + 4-amino-2-methyl-5-(diphosphooxymethyl)pyrimidine + 2 H(+) = thiamine phosphate + CO2 + diphosphate. It carries out the reaction 4-methyl-5-(2-phosphooxyethyl)-thiazole + 4-amino-2-methyl-5-(diphosphooxymethyl)pyrimidine + H(+) = thiamine phosphate + diphosphate. It participates in cofactor biosynthesis; thiamine diphosphate biosynthesis; thiamine phosphate from 4-amino-2-methyl-5-diphosphomethylpyrimidine and 4-methyl-5-(2-phosphoethyl)-thiazole: step 1/1. Its function is as follows. Condenses 4-methyl-5-(beta-hydroxyethyl)thiazole monophosphate (THZ-P) and 2-methyl-4-amino-5-hydroxymethyl pyrimidine pyrophosphate (HMP-PP) to form thiamine monophosphate (TMP). This is Thiamine-phosphate synthase from Prochlorococcus marinus (strain SARG / CCMP1375 / SS120).